A 68-amino-acid chain; its full sequence is Putative membrane protein insertion efficiency factor (68 aa).

Belongs to the UPF0161 family.

The protein localises to the cell inner membrane. Functionally, could be involved in insertion of integral membrane proteins into the membrane. The chain is Putative membrane protein insertion efficiency factor from Aquifex aeolicus (strain VF5).